A 368-amino-acid polypeptide reads, in one-letter code: Phosphate acyltransferase (368 aa).

The disordered stretch occupies residues 338 to 368 (GDGGHDAGGAGTASPAPGHHAEPSAAQSSKA).

This sequence belongs to the PlsX family. Homodimer. Probably interacts with PlsY.

The protein resides in the cytoplasm. The catalysed reaction is a fatty acyl-[ACP] + phosphate = an acyl phosphate + holo-[ACP]. Its pathway is lipid metabolism; phospholipid metabolism. Catalyzes the reversible formation of acyl-phosphate (acyl-PO(4)) from acyl-[acyl-carrier-protein] (acyl-ACP). This enzyme utilizes acyl-ACP as fatty acyl donor, but not acyl-CoA. This Burkholderia ambifaria (strain MC40-6) protein is Phosphate acyltransferase.